The following is a 150-amino-acid chain: Large ribosomal subunit protein uL13 (150 aa).

The tract at residues 130–150 (EHPHSAQNPQVLSITTNELVK) is disordered. A compositionally biased stretch (polar residues) spans 134–150 (SAQNPQVLSITTNELVK).

It belongs to the universal ribosomal protein uL13 family. As to quaternary structure, part of the 50S ribosomal subunit.

Its function is as follows. This protein is one of the early assembly proteins of the 50S ribosomal subunit, although it is not seen to bind rRNA by itself. It is important during the early stages of 50S assembly. The protein is Large ribosomal subunit protein uL13 of Prochlorococcus marinus (strain SARG / CCMP1375 / SS120).